The following is a 388-amino-acid chain: Valine--pyruvate aminotransferase (388 aa).

Lysine 234 is subject to N6-(pyridoxal phosphate)lysine.

It belongs to the class-I pyridoxal-phosphate-dependent aminotransferase family. The cofactor is pyridoxal 5'-phosphate.

It catalyses the reaction L-valine + pyruvate = 3-methyl-2-oxobutanoate + L-alanine. This is Valine--pyruvate aminotransferase from Mycobacterium tuberculosis (strain ATCC 25618 / H37Rv).